A 575-amino-acid polypeptide reads, in one-letter code: Hemagglutinin-neuraminidase (575 aa).

Positions 1–10 (MDGDRSKRDS) are enriched in basic and acidic residues. Positions 1–25 (MDGDRSKRDSYWSTSPGGSTTKLVS) are disordered. Topologically, residues 1-37 (MDGDRSKRDSYWSTSPGGSTTKLVSDSERSGKVDTWL) are intravirion. The interval 10–14 (SYWST) is incorporation in virion. Residues 11 to 24 (YWSTSPGGSTTKLV) are compositionally biased toward polar residues. A helical transmembrane segment spans residues 38-58 (LILAFTQWALSIATVIICIVI). The involved in interaction with F protein stretch occupies residues 59 to 140 (AARQGYSMER…RQELTQLCDS (82 aa)). The Virion surface portion of the chain corresponds to 59–575 (AARQGYSMER…SIPKLCKAES (517 aa)). A glycan (N-linked (GlcNAc...) asparagine; by host) is linked at Asn77. 4 cysteine pairs are disulfide-bonded: Cys192–Cys216, Cys258–Cys271, Cys357–Cys469, and Cys463–Cys473. The segment at 254–259 (NRKSCS) is involved in neuraminidase activity. Residues Asn499 and Asn511 are each glycosylated (N-linked (GlcNAc...) asparagine; by host). Cys535 and Cys544 are oxidised to a cystine.

The protein belongs to the paramyxoviruses hemagglutinin-neuraminidase family. Homotetramer; composed of disulfide-linked homodimers. Interacts with F protein trimer. N-glycosylated; glycans consist of a mixture of high mannose-type oligosaccharides and of complex-type oligosaccharides.

It localises to the virion membrane. Its subcellular location is the host cell membrane. The enzyme catalyses Hydrolysis of alpha-(2-&gt;3)-, alpha-(2-&gt;6)-, alpha-(2-&gt;8)- glycosidic linkages of terminal sialic acid residues in oligosaccharides, glycoproteins, glycolipids, colominic acid and synthetic substrates.. Attaches the virus to sialic acid-containing cell receptors and thereby initiating infection. Binding of HN protein to the receptor induces a conformational change that allows the F protein to trigger virion/cell membranes fusion. Functionally, neuraminidase activity ensures the efficient spread of the virus by dissociating the mature virions from the neuraminic acid containing glycoproteins. The chain is Hemagglutinin-neuraminidase (HN) from Cavia cutleri (Guinea pig).